Consider the following 168-residue polypeptide: 2-C-methyl-D-erythritol 2,4-cyclodiphosphate synthase (168 aa).

2 residues coordinate a divalent metal cation: Asp13 and His15. 4-CDP-2-C-methyl-D-erythritol 2-phosphate contacts are provided by residues 13 to 15 (DVH) and 39 to 40 (HS). His47 is a binding site for a divalent metal cation. 4-CDP-2-C-methyl-D-erythritol 2-phosphate is bound by residues 61-63 (DIG), 66-70 (FPDTD), Phe144, and Lys147.

Belongs to the IspF family. Homotrimer. Requires a divalent metal cation as cofactor.

It catalyses the reaction 4-CDP-2-C-methyl-D-erythritol 2-phosphate = 2-C-methyl-D-erythritol 2,4-cyclic diphosphate + CMP. The protein operates within isoprenoid biosynthesis; isopentenyl diphosphate biosynthesis via DXP pathway; isopentenyl diphosphate from 1-deoxy-D-xylulose 5-phosphate: step 4/6. Functionally, involved in the biosynthesis of isopentenyl diphosphate (IPP) and dimethylallyl diphosphate (DMAPP), two major building blocks of isoprenoid compounds. Catalyzes the conversion of 4-diphosphocytidyl-2-C-methyl-D-erythritol 2-phosphate (CDP-ME2P) to 2-C-methyl-D-erythritol 2,4-cyclodiphosphate (ME-CPP) with a corresponding release of cytidine 5-monophosphate (CMP). This chain is 2-C-methyl-D-erythritol 2,4-cyclodiphosphate synthase, found in Cupriavidus metallidurans (strain ATCC 43123 / DSM 2839 / NBRC 102507 / CH34) (Ralstonia metallidurans).